The chain runs to 236 residues: Ubiquinone biosynthesis O-methyltransferase (236 aa).

Residues R36, G60, D81, and L123 each coordinate S-adenosyl-L-methionine.

Belongs to the methyltransferase superfamily. UbiG/COQ3 family.

The catalysed reaction is a 3-demethylubiquinol + S-adenosyl-L-methionine = a ubiquinol + S-adenosyl-L-homocysteine + H(+). It carries out the reaction a 3-(all-trans-polyprenyl)benzene-1,2-diol + S-adenosyl-L-methionine = a 2-methoxy-6-(all-trans-polyprenyl)phenol + S-adenosyl-L-homocysteine + H(+). Its pathway is cofactor biosynthesis; ubiquinone biosynthesis. Its function is as follows. O-methyltransferase that catalyzes the 2 O-methylation steps in the ubiquinone biosynthetic pathway. This Rickettsia canadensis (strain McKiel) protein is Ubiquinone biosynthesis O-methyltransferase.